The primary structure comprises 455 residues: Carbamoyl phosphate synthase arginine-specific small chain (455 aa).

The N-terminal 28 residues, 1–28, are a transit peptide targeting the mitochondrion; sequence MFARFCKAIPAKGRAFPSVNASIQSRLM. The Glutamine amidotransferase type-1 domain occupies 219–406; the sequence is HVAVIDCGVK…IDSVRKYKAN (188 aa). Cysteine 295 serves as the catalytic Nucleophile. Catalysis depends on residues histidine 379 and glutamate 381.

This sequence belongs to the CarA family. In terms of assembly, heterodimer composed of 2 chains; the small (or glutamine) chain promotes the hydrolysis of glutamine to ammonia, which is used by the large (or ammonia) chain to synthesize carbamoyl phosphate.

It is found in the mitochondrion matrix. The catalysed reaction is hydrogencarbonate + L-glutamine + 2 ATP + H2O = carbamoyl phosphate + L-glutamate + 2 ADP + phosphate + 2 H(+). It catalyses the reaction L-glutamine + H2O = L-glutamate + NH4(+). The protein operates within amino-acid biosynthesis; L-arginine biosynthesis; carbamoyl phosphate from bicarbonate: step 1/1. Small subunit of the arginine-specific carbamoyl phosphate synthase (CPSase). CPSase catalyzes the formation of carbamoyl phosphate from the ammonia moiety of glutamine, carbonate, and phosphate donated by ATP, the first step of the arginine biosynthetic pathway. The small subunit (glutamine amidotransferase) binds and cleaves glutamine to supply the large subunit with the substrate ammonia. The protein is Carbamoyl phosphate synthase arginine-specific small chain (cpa1) of Aspergillus clavatus (strain ATCC 1007 / CBS 513.65 / DSM 816 / NCTC 3887 / NRRL 1 / QM 1276 / 107).